Here is a 253-residue protein sequence, read N- to C-terminus: Flap endonuclease Xni (253 aa).

A Mg(2+)-binding site is contributed by D105. Positions 162-251 (ERHQLLDYIA…HLKLSDLRVN (90 aa)) constitute a 5'-3' exonuclease domain. L172, P181, I183, and I186 together coordinate K(+). The interval 185–190 (GIGPKS) is interaction with DNA.

This sequence belongs to the Xni family. The cofactor is Mg(2+). K(+) is required as a cofactor.

Functionally, has flap endonuclease activity. During DNA replication, flap endonucleases cleave the 5'-overhanging flap structure that is generated by displacement synthesis when DNA polymerase encounters the 5'-end of a downstream Okazaki fragment. The polypeptide is Flap endonuclease Xni (Shewanella amazonensis (strain ATCC BAA-1098 / SB2B)).